The following is a 254-amino-acid chain: Phosphate import ATP-binding protein PstB 2 (254 aa).

Residues Phe9–Val249 enclose the ABC transporter domain. Residue Gly41 to Ser48 coordinates ATP.

This sequence belongs to the ABC transporter superfamily. Phosphate importer (TC 3.A.1.7) family. The complex is composed of two ATP-binding proteins (PstB), two transmembrane proteins (PstC and PstA) and a solute-binding protein (PstS).

It localises to the cell inner membrane. The catalysed reaction is phosphate(out) + ATP + H2O = ADP + 2 phosphate(in) + H(+). Its function is as follows. Part of the ABC transporter complex PstSACB involved in phosphate import. Responsible for energy coupling to the transport system. The protein is Phosphate import ATP-binding protein PstB 2 of Photobacterium profundum (strain SS9).